A 219-amino-acid chain; its full sequence is Glutathione S-transferase-like protein LUC7 (219 aa).

The 82-residue stretch at 3–84 (PFGRLYSFMP…YLAQSGPYSE (82 aa)) folds into the GST N-terminal domain. The 130-residue stretch at 90–219 (DAATSAKIRQ…NLIDVKRVHE (130 aa)) folds into the GST C-terminal domain.

Belongs to the GST superfamily.

Functionally, glutathione S-transferase-like protein; part of the gene cluster that mediates the biosynthesis of the mycotoxin lucilactaene and the lucilactaene-related compound NG-391 that act as cell cycle inhibitors with potent growth inhibitory activity against malarial parasites, moderate growth inhibitory activity against cancer cells, and no activity against bacteria and fungi. Within the cluster, LUC7 and LUC8 encode proteins which are not commonly involved in the biosynthesis of secondary metabolites and are not essential for lucilactaene biosynthesis. This is Glutathione S-transferase-like protein LUC7 from Fusarium sp.